A 113-amino-acid polypeptide reads, in one-letter code: Protein crumbs homolog 3 (113 aa).

The first 24 residues, 1 to 24 (MATPGLGVLLAFGLPMLPSGWSLT), serve as a signal peptide directing secretion. A disordered region spans residues 23-44 (LTAPDPFTNSTTQPPGDESNGG). At 25-49 (APDPFTNSTTQPPGDESNGGLSSGA) the chain is on the extracellular side. The N-linked (GlcNAc...) asparagine glycan is linked to Asn-31. The chain crosses the membrane as a helical span at residues 50 to 70 (IVAITVVFSILGVLLIAVGLF). Residues 71-113 (LLMRKLREKRQTEGTYRPSSEEQVGARAPPPPNLKLPPEERLI) lie on the Cytoplasmic side of the membrane. The segment at 77–113 (REKRQTEGTYRPSSEEQVGARAPPPPNLKLPPEERLI) is interaction with EPB41L5. Residues 80 to 113 (RQTEGTYRPSSEEQVGARAPPPPNLKLPPEERLI) are disordered. A compositionally biased stretch (polar residues) spans 83 to 92 (EGTYRPSSEE). The short motif at 110–113 (ERLI) is the PDZ-binding element.

In terms of assembly, component of a complex composed of CRB3, PALS1 and PATJ. Interacts (via C-terminus) with PALS1 (via PDZ domain). Interacts with PARD6A. Interacts (via intracellular domain) with EPB41L5. Interacts with WDR83. Expressed in the apical renal tubules (at protein level). Expressed in the retinal pigment epithelium.

Its subcellular location is the apical cell membrane. The protein resides in the cell junction. It is found in the tight junction. Functionally, involved in the establishment of cell polarity in mammalian epithelial cells. Regulates the morphogenesis of tight junctions. Involved in promoting phosphorylation and cytoplasmic retention of transcriptional coactivators YAP1 and WWTR1/TAZ which leads to suppression of TGFB1-dependent transcription of target genes such as CCN2/CTGF, SERPINE1/PAI1, SNAI1/SNAIL1 and SMAD7. This chain is Protein crumbs homolog 3 (Crb3), found in Mus musculus (Mouse).